The chain runs to 227 residues: Ribosomal RNA small subunit methyltransferase G (227 aa).

S-adenosyl-L-methionine-binding positions include G69, F74, 119-120 (VE), and R134.

This sequence belongs to the methyltransferase superfamily. RNA methyltransferase RsmG family.

It is found in the cytoplasm. Functionally, specifically methylates the N7 position of a guanine in 16S rRNA. This is Ribosomal RNA small subunit methyltransferase G from Mycoplasmopsis pulmonis (strain UAB CTIP) (Mycoplasma pulmonis).